The sequence spans 492 residues: Membrane-bound lytic murein transglycosylase F (492 aa).

Residues 1–18 form the signal peptide; that stretch reads MKGLFLRIIAIVALLLWA. The non-LT domain stretch occupies residues 19 to 268; sequence IDMVFPWQQI…RIEEKYFNHL (250 aa). Residues 270 to 492 form an LT domain region; sequence QFDYVDTRSY…DTLATTVTTQ (223 aa). The active site involves Glu-313.

The protein in the N-terminal section; belongs to the bacterial solute-binding protein 3 family. In the C-terminal section; belongs to the transglycosylase Slt family.

Its subcellular location is the cell outer membrane. The catalysed reaction is Exolytic cleavage of the (1-&gt;4)-beta-glycosidic linkage between N-acetylmuramic acid (MurNAc) and N-acetylglucosamine (GlcNAc) residues in peptidoglycan, from either the reducing or the non-reducing ends of the peptidoglycan chains, with concomitant formation of a 1,6-anhydrobond in the MurNAc residue.. Murein-degrading enzyme that degrades murein glycan strands and insoluble, high-molecular weight murein sacculi, with the concomitant formation of a 1,6-anhydromuramoyl product. Lytic transglycosylases (LTs) play an integral role in the metabolism of the peptidoglycan (PG) sacculus. Their lytic action creates space within the PG sacculus to allow for its expansion as well as for the insertion of various structures such as secretion systems and flagella. The polypeptide is Membrane-bound lytic murein transglycosylase F (Pasteurella multocida (strain Pm70)).